Consider the following 289-residue polypeptide: 4-hydroxy-tetrahydrodipicolinate synthase (289 aa).

Pyruvate is bound at residue Thr45. The Proton donor/acceptor role is filled by Tyr133. The Schiff-base intermediate with substrate role is filled by Lys161. Residue Ile200 coordinates pyruvate.

The protein belongs to the DapA family. Homotetramer; dimer of dimers.

Its subcellular location is the cytoplasm. The catalysed reaction is L-aspartate 4-semialdehyde + pyruvate = (2S,4S)-4-hydroxy-2,3,4,5-tetrahydrodipicolinate + H2O + H(+). It functions in the pathway amino-acid biosynthesis; L-lysine biosynthesis via DAP pathway; (S)-tetrahydrodipicolinate from L-aspartate: step 3/4. Catalyzes the condensation of (S)-aspartate-beta-semialdehyde [(S)-ASA] and pyruvate to 4-hydroxy-tetrahydrodipicolinate (HTPA). The sequence is that of 4-hydroxy-tetrahydrodipicolinate synthase from Coxiella burnetii (strain Dugway 5J108-111).